The primary structure comprises 259 residues: Bisphosphoglycerate mutase (259 aa).

N-acetylserine is present on S2. Substrate is bound by residues 10 to 17 (RHGEGAWN), 23 to 24 (CS), R62, 89 to 92 (ERHY), R100, and 116 to 117 (RR). H11 serves as the catalytic Tele-phosphohistidine intermediate. E89 serves as the catalytic Proton donor/acceptor. T122 bears the Phosphothreonine mark. 189–190 (GN) lines the substrate pocket.

Belongs to the phosphoglycerate mutase family. BPG-dependent PGAM subfamily. In terms of assembly, homodimer.

It carries out the reaction (2R)-3-phospho-glyceroyl phosphate = (2R)-2,3-bisphosphoglycerate + H(+). The enzyme catalyses (2R)-2-phosphoglycerate = (2R)-3-phosphoglycerate. With respect to regulation, at alkaline pH BPGM favors the synthase reaction; however, at lower pH the phosphatase reaction is dominant. Inhibited by citrate. In terms of biological role, plays a major role in regulating hemoglobin oxygen affinity by controlling the levels of its allosteric effector 2,3-bisphosphoglycerate (2,3-BPG). Also exhibits mutase (EC 5.4.2.11) activity. The sequence is that of Bisphosphoglycerate mutase (BPGM) from Macaca fascicularis (Crab-eating macaque).